The sequence spans 635 residues: Leucine-rich repeat and fibronectin type-III domain-containing protein 4 (635 aa).

An N-terminal signal peptide occupies residues Met-1–Ala-16. The 32-residue stretch at Cys-17 to Arg-48 folds into the LRRNT domain. Residues Cys-17–Leu-518 lie on the Extracellular side of the membrane. Asn-25 and Asn-70 each carry an N-linked (GlcNAc...) asparagine glycan. LRR repeat units follow at residues Arg-49 to Asn-70, Gly-73 to Asp-94, Ser-97 to Gly-118, Asn-121 to Asp-142, Ser-146 to Pro-161, Ala-170 to Gln-191, and Gln-194 to Ser-215. Residues Asn-234–Pro-280 form the LRRCT domain. In terms of domain architecture, Ig-like spans Pro-281–Arg-367. Residues Cys-302 and Cys-351 are joined by a disulfide bond. 4 N-linked (GlcNAc...) asparagine glycosylation sites follow: Asn-324, Asn-333, Asn-376, and Asn-440. The interval His-373 to Gln-410 is disordered. Residues Ser-405–Ala-502 enclose the Fibronectin type-III domain. Residues Thr-519–Val-539 form a helical membrane-spanning segment. Residues Arg-540 to Val-635 lie on the Cytoplasmic side of the membrane. The tract at residues His-555–Ser-583 is disordered. Residues Ser-565–Pro-580 are compositionally biased toward pro residues. Phosphoserine occurs at positions 585 and 626. The PDZ-binding motif lies at Glu-632 to Val-635.

This sequence belongs to the LRFN family. As to quaternary structure, can form heteromeric complexes with LRFN1, LRFN2, LRFN3 and LRFN5. Unable to form homophilic interactions across cell junctions. Interacts with DLG1, DLG2, DLG3 and DLG4. In terms of processing, glycosylated.

It localises to the membrane. Promotes neurite outgrowth in hippocampal neurons. May play a role in redistributing DLG4 to the cell periphery. This Homo sapiens (Human) protein is Leucine-rich repeat and fibronectin type-III domain-containing protein 4 (LRFN4).